The following is a 426-amino-acid chain: Dihydroorotase (426 aa).

Histidine 58 and histidine 60 together coordinate Zn(2+). Substrate-binding positions include 60–62 and asparagine 92; that span reads HLR. Zn(2+) contacts are provided by aspartate 150, histidine 177, and histidine 230. Substrate is bound at residue asparagine 276. Aspartate 303 serves as a coordination point for Zn(2+). Residue aspartate 303 is part of the active site. Residues histidine 307 and 321–322 each bind substrate; that span reads FG.

It belongs to the metallo-dependent hydrolases superfamily. DHOase family. Class I DHOase subfamily. The cofactor is Zn(2+).

The catalysed reaction is (S)-dihydroorotate + H2O = N-carbamoyl-L-aspartate + H(+). The protein operates within pyrimidine metabolism; UMP biosynthesis via de novo pathway; (S)-dihydroorotate from bicarbonate: step 3/3. Catalyzes the reversible cyclization of carbamoyl aspartate to dihydroorotate. The polypeptide is Dihydroorotase (Listeria monocytogenes serovar 1/2a (strain ATCC BAA-679 / EGD-e)).